The primary structure comprises 274 residues: Mitochondrial S-adenosylmethionine carrier protein (274 aa).

Solcar repeat units follow at residues 4–77 (PGFT…VKSL), 86–168 (FKPV…LKAL), and 177–265 (VDSW…ARSL). The next 6 membrane-spanning stretches (helical) occupy residues 5 to 25 (GFTA…LILF), 49 to 69 (IYAG…AFFL), 85 to 105 (HFKP…ACLI), 142 to 162 (RGYK…FPLW), 182 to 202 (SAVC…PLDV), and 238 to 258 (FAGV…FLGA).

Belongs to the mitochondrial carrier (TC 2.A.29) family.

The protein resides in the mitochondrion inner membrane. The catalysed reaction is S-adenosyl-L-homocysteine(out) + S-adenosyl-L-methionine(in) = S-adenosyl-L-homocysteine(in) + S-adenosyl-L-methionine(out). In terms of biological role, mitochondrial S-adenosyl-L-methionine/S-adenosyl-L-homocysteine antiporter. Mediates the exchange of cytosolic S-adenosyl-L-methionine, the predominant methyl-group donor for macromolecule methylation processes, for mitochondrial S-adenosylhomocysteine(SAH), a by-product of methylation reactions. The polypeptide is Mitochondrial S-adenosylmethionine carrier protein (Mus musculus (Mouse)).